The sequence spans 690 residues: Protein-glucosylgalactosylhydroxylysine glucosidase (690 aa).

Position 299-300 (299-300 (WD)) interacts with substrate. Glu429 functions as the Proton donor in the catalytic mechanism. 497-498 (KQ) provides a ligand contact to substrate.

Belongs to the glycosyl hydrolase 65 family.

It carries out the reaction (5R)-5-O-[alpha-D-glucosyl-(1-&gt;2)-beta-D-galactosyl]-5-hydroxy-L-lysyl-[collagen] + H2O = (5R)-5-O-(beta-D-galactosyl)-5-hydroxy-L-lysyl-[collagen] + D-glucose. Its function is as follows. Catalyzes the hydrolysis of glucose from the disaccharide unit linked to hydroxylysine residues of collagen and collagen-like proteins. The sequence is that of Protein-glucosylgalactosylhydroxylysine glucosidase from Mus musculus (Mouse).